The primary structure comprises 543 residues: Glutamyl-tRNA(Gln) amidotransferase subunit A, chloroplastic/mitochondrial (543 aa).

Residues K123 and S198 each act as charge relay system in the active site. S222 acts as the Acyl-ester intermediate in catalysis.

The protein belongs to the amidase family. GatA subfamily. Subunit of the heterotrimeric GatCAB amidotransferase (AdT) complex, composed of A, B and C subunits.

The protein localises to the mitochondrion. It localises to the plastid. Its subcellular location is the chloroplast stroma. The catalysed reaction is L-glutamyl-tRNA(Gln) + L-glutamine + ATP + H2O = L-glutaminyl-tRNA(Gln) + L-glutamate + ADP + phosphate + H(+). In terms of biological role, allows the formation of correctly charged Gln-tRNA(Gln) through the transamidation of misacylated Glu-tRNA(Gln) in chloroplasts and mitochondria. The reaction takes place in the presence of glutamine and ATP through an activated gamma-phospho-Glu-tRNA(Gln). In Oryza sativa subsp. indica (Rice), this protein is Glutamyl-tRNA(Gln) amidotransferase subunit A, chloroplastic/mitochondrial.